A 433-amino-acid polypeptide reads, in one-letter code: Methylenetetrahydrofolate--tRNA-(uracil-5-)-methyltransferase TrmFO (433 aa).

8–13 (GAGLAG) is a binding site for FAD.

Belongs to the MnmG family. TrmFO subfamily. The cofactor is FAD.

The protein resides in the cytoplasm. The catalysed reaction is uridine(54) in tRNA + (6R)-5,10-methylene-5,6,7,8-tetrahydrofolate + NADH + H(+) = 5-methyluridine(54) in tRNA + (6S)-5,6,7,8-tetrahydrofolate + NAD(+). The enzyme catalyses uridine(54) in tRNA + (6R)-5,10-methylene-5,6,7,8-tetrahydrofolate + NADPH + H(+) = 5-methyluridine(54) in tRNA + (6S)-5,6,7,8-tetrahydrofolate + NADP(+). Its function is as follows. Catalyzes the folate-dependent formation of 5-methyl-uridine at position 54 (M-5-U54) in all tRNAs. The chain is Methylenetetrahydrofolate--tRNA-(uracil-5-)-methyltransferase TrmFO from Carboxydothermus hydrogenoformans (strain ATCC BAA-161 / DSM 6008 / Z-2901).